A 605-amino-acid polypeptide reads, in one-letter code: Podocalyxin-like protein 2 (605 aa).

Residues 1–32 (MGRLLRAARLPPLLSPLLLLLVGGAFLGACVA) form the signal peptide. At 33-500 (GSDEPGPEGL…ASQVRSDYGT (468 aa)) the chain is on the extracellular side. Residue Ser79 is glycosylated (O-linked (Xyl...) (chondroitin sulfate) serine). Sulfotyrosine occurs at positions 97 and 118. Residues 129-134 (SIEDTS) are O-glycosylated at one site. The disordered stretch occupies residues 129–347 (SIEDTSQAQE…PGDMELTPSS (219 aa)). An O-linked (GalNAc...) serine glycan is attached at Ser144. The span at 162-189 (EEEEEEEEEEEREKEEVEKQEEEEEEEL) shows a compositional bias: acidic residues. Asn193 is a glycosylation site (N-linked (GlcNAc...) asparagine). Residues 207–217 (SLTSSSQTPGA) are compositionally biased toward polar residues. Composition is skewed to low complexity over residues 241–255 (PSLL…TVTP) and 288–298 (EATAGAAGLSG). A glycan (N-linked (GlcNAc...) asparagine) is linked at Asn395. The chain crosses the membrane as a helical span at residues 501 to 521 (LFVVLVVIGAICIIIIALGLL). The Cytoplasmic segment spans residues 522 to 605 (YNCWQRRLPK…SDVFEEDTHL (84 aa)). Positions 554–605 (LDVASDSQSEMQEKHPSLNGGGALNGPGSWGALMGGKRDPEDSDVFEEDTHL) are disordered. Ser570 bears the Phosphoserine mark. The segment covering 572–582 (NGGGALNGPGS) has biased composition (gly residues). Acidic residues predominate over residues 594-605 (EDSDVFEEDTHL). Ser596 is modified (phosphoserine).

The protein belongs to the podocalyxin family. As to quaternary structure, homodimer; disulfide-linked. Interacts with SELL, SELE and SELP. Post-translationally, O-glycosylated; contains chondroitin sulfate. Displays sialylated O-linked oligosaccharides. Sulfation is necessary for interaction with SELL. Sialylated O-linked oligosaccharides are necessary for interaction with SELL, SELE and SELP. Expressed in T-cells, B-cells and monocytes. Expression is higher on memory and germinal center cells than on naive B-cells (at protein level). Highly expressed in brain. Moderately expressed in pancreas, kidney and lymphoid node. Weakly expressed in liver. Detected in both endothelial cells and CD34+ bone marrow cells.

The protein localises to the membrane. Functionally, acts as a ligand for vascular selectins. Mediates rapid rolling of leukocytes over vascular surfaces through high affinity divalent cation-dependent interactions with E-, P- and L-selectins. The protein is Podocalyxin-like protein 2 (PODXL2) of Homo sapiens (Human).